Reading from the N-terminus, the 95-residue chain is Large ribosomal subunit protein eL37x (95 aa).

Residues Cys19, Cys22, Cys34, and Cys37 each contribute to the Zn(2+) site. Residues 19 to 37 (CVRCGRRSFHIQKSRCSAC) form a C4-type zinc finger. Residues 73-95 (RFKTGFREGTEAKPRSKASASSA) are disordered. Residues 77–86 (GFREGTEAKP) show a composition bias toward basic and acidic residues.

It belongs to the eukaryotic ribosomal protein eL37 family. Zn(2+) is required as a cofactor.

Binds to the 23S rRNA. The protein is Large ribosomal subunit protein eL37x (RPL37C) of Arabidopsis thaliana (Mouse-ear cress).